The following is a 242-amino-acid chain: Floral homeotic protein AGAMOUS (242 aa).

In terms of domain architecture, MADS-box spans 19–73; sequence RGKIEIKRIENTTNRQVTFCKRRNGLLKKAYELSVLCDAEVALIVFSTRGRLYEY. One can recognise a K-box domain in the interval 103-193; sequence AQFYQQEASK…RAKIAENERA (91 aa).

As to expression, flower. Preferentially expressed in stamen and carpel and weakly in petal. Undetected in leaves and roots.

The protein localises to the nucleus. Functionally, probable transcription factor involved in regulating genes that determines stamen and carpel development in wild-type flowers. The protein is Floral homeotic protein AGAMOUS (AG2) of Panax ginseng (Korean ginseng).